The sequence spans 336 residues: Anthranilate phosphoribosyltransferase (336 aa).

Residues glycine 82, 85–86, threonine 90, 92–95, 110–118, and serine 122 contribute to the 5-phospho-alpha-D-ribose 1-diphosphate site; these read GD, NIST, and KHGNRFASG. Glycine 82 is an anthranilate binding site. Serine 94 provides a ligand contact to Mg(2+). Asparagine 113 is an anthranilate binding site. Arginine 168 provides a ligand contact to anthranilate. Positions 227 and 228 each coordinate Mg(2+).

Belongs to the anthranilate phosphoribosyltransferase family. As to quaternary structure, homodimer. Mg(2+) is required as a cofactor.

It carries out the reaction N-(5-phospho-beta-D-ribosyl)anthranilate + diphosphate = 5-phospho-alpha-D-ribose 1-diphosphate + anthranilate. The protein operates within amino-acid biosynthesis; L-tryptophan biosynthesis; L-tryptophan from chorismate: step 2/5. Functionally, catalyzes the transfer of the phosphoribosyl group of 5-phosphorylribose-1-pyrophosphate (PRPP) to anthranilate to yield N-(5'-phosphoribosyl)-anthranilate (PRA). The polypeptide is Anthranilate phosphoribosyltransferase (Desulfitobacterium hafniense (strain DSM 10664 / DCB-2)).